Here is a 216-residue protein sequence, read N- to C-terminus: Ras-related protein Rab-5C (216 aa).

S30, A31, G33, K34, S35, S36, H47, E48, T53, and G79 together coordinate GTP. Residue S35 coordinates Mg(2+). 2 consecutive short sequence motifs (switch) follow at residues 45–57 (QFHE…IGAA) and 78–94 (AGQE…YRGA). Mg(2+) is bound at residue T53. Residue S85 is modified to Phosphoserine. Residues N134, K135, D137, A165, and K166 each contribute to the GTP site. The interval 185 to 216 (NEPQNAAGAPGRNRGVDLQENNPASRSQCCSN) is disordered. The span at 203–216 (QENNPASRSQCCSN) shows a compositional bias: polar residues. S-geranylgeranyl cysteine attachment occurs at residues C213 and C214.

Belongs to the small GTPase superfamily. Rab family. In terms of assembly, interacts with EEA1 and INCA1. Interacts with GDI1, GDI2, CHML and CHM; phosphorylation at Ser-85 disrupts this interaction. Mg(2+) is required as a cofactor. Phosphorylation of Ser-85 in the switch II region by LRRK2 prevents the association of RAB regulatory proteins, including CHM, CHML and RAB GDP dissociation inhibitors GDI1 and GDI2.

It is found in the cell membrane. Its subcellular location is the early endosome membrane. It localises to the melanosome. The enzyme catalyses GTP + H2O = GDP + phosphate + H(+). Regulated by guanine nucleotide exchange factors (GEFs) which promote the exchange of bound GDP for free GTP. Regulated by GTPase activating proteins (GAPs) which increase the GTP hydrolysis activity. Inhibited by GDP dissociation inhibitors (GDIs). Its function is as follows. The small GTPases Rab are key regulators of intracellular membrane trafficking, from the formation of transport vesicles to their fusion with membranes. Rabs cycle between an inactive GDP-bound form and an active GTP-bound form that is able to recruit to membranes different sets of downstream effectors directly responsible for vesicle formation, movement, tethering and fusion. The sequence is that of Ras-related protein Rab-5C (RAB5C) from Bos taurus (Bovine).